The primary structure comprises 314 residues: Ribosomal RNA small subunit methyltransferase H (314 aa).

Residues 34 to 36, aspartate 54, phenylalanine 83, aspartate 104, and glutamine 111 each bind S-adenosyl-L-methionine; that span reads GGH.

This sequence belongs to the methyltransferase superfamily. RsmH family.

The protein localises to the cytoplasm. It catalyses the reaction cytidine(1402) in 16S rRNA + S-adenosyl-L-methionine = N(4)-methylcytidine(1402) in 16S rRNA + S-adenosyl-L-homocysteine + H(+). Its function is as follows. Specifically methylates the N4 position of cytidine in position 1402 (C1402) of 16S rRNA. This chain is Ribosomal RNA small subunit methyltransferase H, found in Ligilactobacillus salivarius (strain UCC118) (Lactobacillus salivarius).